The sequence spans 116 residues: UPF0127 protein PF1050 (116 aa).

Belongs to the UPF0127 family.

This is UPF0127 protein PF1050 from Pyrococcus furiosus (strain ATCC 43587 / DSM 3638 / JCM 8422 / Vc1).